Reading from the N-terminus, the 607-residue chain is Dolichyl-diphosphooligosaccharide--protein glycosyltransferase subunit 1 (607 aa).

The N-terminal stretch at methionine 1–alanine 24 is a signal peptide. Residues serine 25–leucine 434 lie on the Lumenal side of the membrane. Residue lysine 187 is modified to N6-acetyllysine. Residue asparagine 299 is glycosylated (N-linked (GlcNAc...) asparagine). A helical membrane pass occupies residues methionine 435–isoleucine 455. The Cytoplasmic segment spans residues tyrosine 456–leucine 607. N6-acetyllysine; alternate is present on lysine 538. A Glycyl lysine isopeptide (Lys-Gly) (interchain with G-Cter in SUMO2); alternate cross-link involves residue lysine 538.

This sequence belongs to the OST1 family. In terms of assembly, component of the oligosaccharyltransferase (OST) complex. OST exists in two different complex forms which contain common core subunits RPN1, RPN2, OST48, OST4, DAD1 and TMEM258, either STT3A or STT3B as catalytic subunits, and form-specific accessory subunits. STT3A complex assembly occurs through the formation of 3 subcomplexes. Subcomplex 1 contains RPN1 and TMEM258, subcomplex 2 contains the STT3A-specific subunits STT3A, DC2/OSTC, and KCP2 as well as the core subunit OST4, and subcomplex 3 contains RPN2, DAD1, and OST48. The STT3A complex can form stable complexes with the Sec61 complex or with both the Sec61 and TRAP complexes. Interacts with TMEM35A/NACHO. Post-translationally, ubiquitinated by the ECS(ASB11) complex. Ufmylated by UFL1 in response to endoplasmic reticulum stress, promoting reticulophagy of endoplasmic reticulum sheets.

Its subcellular location is the endoplasmic reticulum membrane. The protein operates within protein modification; protein glycosylation. Its function is as follows. Subunit of the oligosaccharyl transferase (OST) complex that catalyzes the initial transfer of a defined glycan (Glc(3)Man(9)GlcNAc(2) in eukaryotes) from the lipid carrier dolichol-pyrophosphate to an asparagine residue within an Asn-X-Ser/Thr consensus motif in nascent polypeptide chains, the first step in protein N-glycosylation. N-glycosylation occurs cotranslationally and the complex associates with the Sec61 complex at the channel-forming translocon complex that mediates protein translocation across the endoplasmic reticulum (ER). All subunits are required for a maximal enzyme activity. The polypeptide is Dolichyl-diphosphooligosaccharide--protein glycosyltransferase subunit 1 (Canis lupus familiaris (Dog)).